The following is a 304-amino-acid chain: Protein translocase subunit SecF (304 aa).

The next 6 helical transmembrane spans lie at 20–40 (AKLFFIISGVLIVISLFLIFT), 143–163 (AMMALLYANIGVLIYVAIRFE), 164–184 (LIFAIGAILALVHDVIITLGF), 195–215 (TVVAALLALIGYSLNDTIVVF), 244–266 (LSRTIITSLLTFFTVLSLMIFGG), and 276–298 (LVIGIIVGTYSSIGIASGLVYLI).

It belongs to the SecD/SecF family. SecF subfamily. As to quaternary structure, forms a complex with SecD. Part of the essential Sec protein translocation apparatus which comprises SecA, SecYEG and auxiliary proteins SecDF. Other proteins may also be involved.

The protein resides in the cell inner membrane. Part of the Sec protein translocase complex. Interacts with the SecYEG preprotein conducting channel. SecDF uses the proton motive force (PMF) to complete protein translocation after the ATP-dependent function of SecA. In Calditerrivibrio nitroreducens (strain DSM 19672 / NBRC 101217 / Yu37-1), this protein is Protein translocase subunit SecF.